The sequence spans 62 residues: Delta-theraphotoxin-Cg1a 1 (62 aa).

A signal peptide spans 1-21; that stretch reads MKTSILFVIFSLALLFALSAA. The propeptide occupies 22-29; the sequence is TEIEETDR. Cystine bridges form between cysteine 31–cysteine 46, cysteine 38–cysteine 51, and cysteine 45–cysteine 58.

The protein belongs to the neurotoxin 10 (Hwtx-1) family. 33 (Jztx-1) subfamily. In terms of tissue distribution, expressed by the venom gland.

The protein localises to the secreted. Its function is as follows. Inhibits voltage-gated sodium channels, preferentially subtype Nav1.5/SCN5A (in cardiac myocytes), but also Nav1.6/SCN8A and Nav1.7/SCN9A (TTX-sensitive Nav in rat DRG neurons) and invertebrate Nav (in insect neurons) as well as voltage-gated potassium channels of the subtype Kv2.1/KCNB1. Is suggested to bind to site 3 of the sodium channels and inhibit the inactivation of the activated channels, thereby blocking neuronal transmission. On potassium channels, inhibits activation of channels with an IC(50) of 8.05 uM through a voltage sensor-trapping mechanism. Increases muscle contraction in several assays (mouse phrenic nerve-diaphragm, toad heart, rat vas deferens) and is suggested to act both presynaptically and postsynaptically. Moderately inhibits voltage-gated sodium channels and weakly inhibits voltage-gated potassium channel. Inhibits the inactivation of rat Nav1.2/SCN2A (IC(50)=870 nM), rat Nav1.3/SCN3A (IC(50)=845 nM), rat Nav1.4/SCN4A (IC(50)=339 nM), human Nav1.5/SCN5A (IC(50)=335 nM) and human Nav1.7/SCN9A sodium channels (IC(50)=348 nM). The toxin delays the inactivation of sodium channels without affecting the activation and steady-state inactivation kinetics in the physiological range of voltages. Site-directed mutagenesis of the sodium channel indicates that the toxin interacts with site 3 located at the extracellular S3-S4 linker of domain IV. On potassium channels, it inhibits activation of channels with an IC(50) of 8.05 uM through a voltage sensor-trapping mechanism. It increases muscle contraction in several assays (mouse phrenic nerve-diaphragm, toad heart, rat vas deferens) and is suggested to act both presynaptically and postsynaptically. The polypeptide is Delta-theraphotoxin-Cg1a 1 (Chilobrachys guangxiensis (Chinese earth tiger tarantula)).